The primary structure comprises 516 residues: MTDIHNHKILILDFGSQYTQLIARRVREVGVFCEIFPHDVAADFIKNYQAKGIILSGGPESVYDSDVKAPEIVFELGVPVLGICYGMQTMVMQHGGEVKGADQSEFGKAIINILNSTNNIFSNMEHEQLVWMSHSDKVTQTGEHFEIIASSTNAPVAAVAHKNKPFFGVQFHPETTHTENGKQIIENFVVNICGCDTLWNIENIIENDIKEIKQKVGTDKVILGLSGGVDSSVVAAILHQAIGDQLTCIFVDTGLLRLNEGDQVMQVFAEHMDINVIRINAKNRFLDALRGICDPEQKRKIIGKLFVDIFDEEAAKIENAKWLAQGTIYSDVIESAGNNQSKAHVIKSHHNVGGLPKEMKLKLLEPLRELFKDEVRKLGLGLGLPYNMLYRHPFPGPGLGVRILGEIKKEYVETLQKADAIFTEELYKHNLYHDVSQAFGVFLPVKSVGVVGDQRRYEYVIALRAVVSIDFMTATWANLPYDFLSLVSNRIVNEVKQVSRVVYDVTGKPPGTIEWE.

The region spanning 8-198 is the Glutamine amidotransferase type-1 domain; sequence KILILDFGSQ…VVNICGCDTL (191 aa). The active-site Nucleophile is Cys-84. Residues His-172 and Glu-174 contribute to the active site. Residues 199–391 enclose the GMPS ATP-PPase domain; that stretch reads WNIENIIEND…LGLPYNMLYR (193 aa). 226 to 232 is an ATP binding site; sequence SGGVDSS.

In terms of assembly, homodimer.

It carries out the reaction XMP + L-glutamine + ATP + H2O = GMP + L-glutamate + AMP + diphosphate + 2 H(+). It functions in the pathway purine metabolism; GMP biosynthesis; GMP from XMP (L-Gln route): step 1/1. Catalyzes the synthesis of GMP from XMP. The sequence is that of GMP synthase [glutamine-hydrolyzing] from Francisella tularensis subsp. tularensis (strain FSC 198).